The following is a 217-amino-acid chain: Peroxiredoxin (217 aa).

One can recognise a Thioredoxin domain in the interval 2 to 159 (AVIGEKFPDV…VVRLVKALQT (158 aa)). Cys46 (cysteine sulfenic acid (-SOH) intermediate) is an active-site residue. Arg122 serves as a coordination point for substrate.

The protein belongs to the peroxiredoxin family. Prx6 subfamily. In terms of assembly, homodecamer. Pentamer of dimers that assemble into a ring structure.

Its subcellular location is the cytoplasm. It carries out the reaction a hydroperoxide + [thioredoxin]-dithiol = an alcohol + [thioredoxin]-disulfide + H2O. Its function is as follows. Thiol-specific peroxidase that catalyzes the reduction of hydrogen peroxide and organic hydroperoxides to water and alcohols, respectively. Plays a role in cell protection against oxidative stress by detoxifying peroxides. This is Peroxiredoxin from Methanococcus vannielii (strain ATCC 35089 / DSM 1224 / JCM 13029 / OCM 148 / SB).